Here is a 447-residue protein sequence, read N- to C-terminus: Transcription factor azf1 (447 aa).

Disordered stretches follow at residues 125–155 (HNGASQQPPGAQSSSNEEGAQGKSSSSNEVE) and 174–199 (QSPGVQSLPPLQQLTHGGSNGYPQSY). Residues 127 to 139 (GASQQPPGAQSSS) show a composition bias toward low complexity. A compositionally biased stretch (polar residues) spans 140–155 (NEEGAQGKSSSSNEVE). C2H2-type zinc fingers lie at residues 225–249 (YACTLPQCGKSFAQKTHLDIHMRAH), 255–279 (FVCKEPSCGQRFSQLGNLKTHQRRH), 285–307 (FSCDICQKRFAQRGNVRAHKITH), and 313–338 (FTCLLDDCGKQFTQLGNLKSHQNKFH). Positions 377–447 (NKGIKGRGKD…EPYFIERQAH (71 aa)) are disordered. The segment covering 397–416 (PGSESRRRIEPLSSTDDKMR) has biased composition (basic and acidic residues). Positions 421 to 431 (GDTSMYNGGSS) are enriched in polar residues.

It is found in the nucleus. Transcription factor that acts as a positive regulator of ochratoxin A (OTA) biosynthesis via controlling the expression of antioxidant genes and oxidative phosphorylation genes. In Aspergillus niger (strain ATCC MYA-4892 / CBS 513.88 / FGSC A1513), this protein is Transcription factor azf1.